Here is a 517-residue protein sequence, read N- to C-terminus: Crotonobetaine/carnitine--CoA ligase (517 aa).

It belongs to the ATP-dependent AMP-binding enzyme family.

It carries out the reaction 4-(trimethylamino)butanoate + ATP + CoA = 4-(trimethylamino)butanoyl-CoA + AMP + diphosphate. It catalyses the reaction crotonobetaine + ATP + CoA = crotonobetainyl-CoA + AMP + diphosphate. The enzyme catalyses (R)-carnitine + ATP + CoA = (R)-carnitinyl-CoA + AMP + diphosphate. It participates in amine and polyamine metabolism; carnitine metabolism. Its function is as follows. Catalyzes the transfer of CoA to carnitine, generating the initial carnitinyl-CoA needed for the CaiB reaction cycle. Also has activity toward crotonobetaine and gamma-butyrobetaine. This is Crotonobetaine/carnitine--CoA ligase from Escherichia coli O6:K15:H31 (strain 536 / UPEC).